The sequence spans 343 residues: NADH-ubiquinone oxidoreductase chain 2 (343 aa).

8 helical membrane-spanning segments follow: residues 1-21 (MNPM…TMIT), 59-81 (YYLI…ALNT), 96-116 (TIIT…SWLP), 150-170 (NITL…LGSL), 178-198 (LMAF…TMAP), 200-220 (ISTL…LLIN), 241-261 (MTIL…SGFM), and 270-290 (LISM…LLSL).

The protein belongs to the complex I subunit 2 family.

It localises to the mitochondrion inner membrane. The catalysed reaction is a ubiquinone + NADH + 5 H(+)(in) = a ubiquinol + NAD(+) + 4 H(+)(out). Its function is as follows. Core subunit of the mitochondrial membrane respiratory chain NADH dehydrogenase (Complex I) that is believed to belong to the minimal assembly required for catalysis. Complex I functions in the transfer of electrons from NADH to the respiratory chain. The immediate electron acceptor for the enzyme is believed to be ubiquinone. The sequence is that of NADH-ubiquinone oxidoreductase chain 2 (MT-ND2) from Lycodon semicarinatus (Ryukyu odd-tooth snake).